Reading from the N-terminus, the 277-residue chain is Shikimate dehydrogenase (NADP(+)) (277 aa).

Shikimate-binding positions include 15 to 17 (SLS) and T62. The Proton acceptor role is filled by K66. The shikimate site is built by N87 and D102. NADP(+)-binding positions include 127 to 131 (GAGGA), 151 to 156 (NRTVDK), and I219. Y221 provides a ligand contact to shikimate. G242 is an NADP(+) binding site.

Belongs to the shikimate dehydrogenase family. In terms of assembly, homodimer.

It catalyses the reaction shikimate + NADP(+) = 3-dehydroshikimate + NADPH + H(+). Its pathway is metabolic intermediate biosynthesis; chorismate biosynthesis; chorismate from D-erythrose 4-phosphate and phosphoenolpyruvate: step 4/7. Involved in the biosynthesis of the chorismate, which leads to the biosynthesis of aromatic amino acids. Catalyzes the reversible NADPH linked reduction of 3-dehydroshikimate (DHSA) to yield shikimate (SA). In Bacillus cereus (strain ZK / E33L), this protein is Shikimate dehydrogenase (NADP(+)).